Consider the following 79-residue polypeptide: Dolichyl-diphosphooligosaccharide--protein glycosyltransferase subunit TMEM258 (79 aa).

The next 2 membrane-spanning stretches (helical) occupy residues 17–37 and 59–79; these read VFPH…AWFF and VASL…GIFV.

This sequence belongs to the OST5 family. In terms of assembly, component of the oligosaccharyltransferase (OST) complex.

The protein localises to the membrane. It localises to the endoplasmic reticulum. The protein resides in the cytoplasm. It participates in protein modification; protein glycosylation. In terms of biological role, subunit of the oligosaccharyl transferase (OST) complex that catalyzes the initial transfer of a defined glycan (Glc(3)Man(9)GlcNAc(2) in eukaryotes) from the lipid carrier dolichol-pyrophosphate to an asparagine residue within an Asn-X-Ser/Thr consensus motif in nascent polypeptide chains, the first step in protein N-glycosylation. N-glycosylation occurs cotranslationally and the complex associates with the Sec61 complex at the channel-forming translocon complex that mediates protein translocation across the endoplasmic reticulum (ER). All subunits are required for a maximal enzyme activity. The sequence is that of Dolichyl-diphosphooligosaccharide--protein glycosyltransferase subunit TMEM258 from Danio rerio (Zebrafish).